Consider the following 200-residue polypeptide: NADH-quinone oxidoreductase subunit C (200 aa).

Belongs to the complex I 30 kDa subunit family. As to quaternary structure, NDH-1 is composed of 14 different subunits. Subunits NuoB, C, D, E, F, and G constitute the peripheral sector of the complex.

It localises to the cell inner membrane. It carries out the reaction a quinone + NADH + 5 H(+)(in) = a quinol + NAD(+) + 4 H(+)(out). Its function is as follows. NDH-1 shuttles electrons from NADH, via FMN and iron-sulfur (Fe-S) centers, to quinones in the respiratory chain. The immediate electron acceptor for the enzyme in this species is believed to be ubiquinone. Couples the redox reaction to proton translocation (for every two electrons transferred, four hydrogen ions are translocated across the cytoplasmic membrane), and thus conserves the redox energy in a proton gradient. This is NADH-quinone oxidoreductase subunit C from Rhizobium leguminosarum bv. trifolii (strain WSM2304).